We begin with the raw amino-acid sequence, 315 residues long: Probable cell division protein WhiA (315 aa).

Positions 277–311 (SLQELGAMMPSGQISKSGVNHRLRKLNQIAEGYQQ) form a DNA-binding region, H-T-H motif.

The protein belongs to the WhiA family.

Functionally, involved in cell division and chromosome segregation. This is Probable cell division protein WhiA from Lacticaseibacillus paracasei (strain ATCC 334 / BCRC 17002 / CCUG 31169 / CIP 107868 / KCTC 3260 / NRRL B-441) (Lactobacillus paracasei).